The sequence spans 84 residues: MSSGGLLLLLGLLTLWAELTPISGHDRPTFCNLAPESGRCRGHLRRIYYNLESNKCEVFFYGGCGGNDNNFSTWDECRHTCVGK.

Residues 1-24 (MSSGGLLLLLGLLTLWAELTPISG) form the signal peptide. Residues 31–81 (CNLAPESGRCRGHLRRIYYNLESNKCEVFFYGGCGGNDNNFSTWDECRHTC) enclose the BPTI/Kunitz inhibitor domain. 3 disulfides stabilise this stretch: cysteine 31/cysteine 81, cysteine 40/cysteine 64, and cysteine 56/cysteine 77. Residue asparagine 70 is glycosylated (N-linked (GlcNAc...) asparagine).

Belongs to the venom Kunitz-type family. As to expression, expressed by the venom gland.

It localises to the secreted. Serine protease inhibitor that inhibits plasmin and trypsin. The protein is Kunitz-type serine protease inhibitor B4 of Daboia siamensis (Eastern Russel's viper).